Consider the following 1958-residue polypeptide: Sodium channel protein type 10 subunit alpha (1958 aa).

Residues 1–125 (MEFPFGSVGT…FNLIRRTAIK (125 aa)) lie on the Cytoplasmic side of the membrane. The segment at 27–54 (QIAAHRAAKKGRPKQRGQKDKSEKPRPQ) is disordered. Over residues 32-42 (RAAKKGRPKQR) the composition is skewed to basic residues. Positions 43–54 (GQKDKSEKPRPQ) are enriched in basic and acidic residues. The stretch at 116–404 (FNLIRRTAIK…VTMAYEEQSQ (289 aa)) is one I repeat. The chain crosses the membrane as a helical span at residues 126 to 149 (VSVHSWFSIFITVTILVNCVCMTR). The Extracellular portion of the chain corresponds to 150 to 154 (TDLPE). Residues 155–174 (KLEYAFTVVYTFEALIKILA) traverse the membrane as a helical segment. Residues 175-187 (RGFCLNEFTYLRD) lie on the Cytoplasmic side of the membrane. The chain crosses the membrane as a helical span at residues 188–206 (PWNWLDFSVITLAYVGAAI). Over 207–212 (DLRGIS) the chain is Extracellular. Residues 213–232 (GLRTFRVLRALKTVSVIPGL) traverse the membrane as a helical; Voltage-sensor segment. Topologically, residues 233 to 248 (KVIVGALIHSVRKLAD) are cytoplasmic. A helical transmembrane segment spans residues 249–272 (VTILTVFCLSVFALVGLQLFKGNL). Topologically, residues 273 to 340 (KNKCIKNGTD…PDFNYTSFDS (68 aa)) are extracellular. Cysteines 276 and 318 form a disulfide. Residues Asn279, Asn288, Asn311, and Asn334 are each glycosylated (N-linked (GlcNAc...) asparagine). The pore-forming intramembrane region spans 341 to 365 (FAWAFLSLFRLMTQDSWERLYQQTL). Over 366–372 (RASGKMY) the chain is Extracellular. The chain crosses the membrane as a helical span at residues 373 to 398 (MVFFVLVIFLGSFYLVNLILAVVTMA). Topologically, residues 399-658 (YEEQSQATIA…KWKKFKMVLF (260 aa)) are cytoplasmic. 4 positions are modified to phosphoserine: Ser440, Ser443, Ser466, and Ser478. 2 disordered regions span residues 444-483 (HNGS…PYNQ) and 539-583 (GRGA…APEG). Over residues 549-560 (PRSPLPQSPNPG) the composition is skewed to pro residues. A phosphoserine mark is found at Ser611 and Ser614. An II repeat occupies 646 to 910 (CCPKWKKFKM…EDDGEVNNLQ (265 aa)). Residues 659–683 (ELVTDPFAELTITLCIVVNTVFMAM) traverse the membrane as a helical segment. The Extracellular segment spans residues 684–694 (EHYPMTDAFDA). The chain crosses the membrane as a helical span at residues 695–718 (MLQAGNIVFTVFFTMEMAFKIIAF). The Cytoplasmic segment spans residues 719–726 (DPYYYFQK). A helical membrane pass occupies residues 727–746 (KWNIFDCVIVTVSLLELSTS). Topologically, residues 747–752 (KKGSLS) are extracellular. The helical; Voltage-sensor transmembrane segment at 753 to 772 (VLRTFRLLRVFKLAKSWPTL) threads the bilayer. Residues 773–788 (NMLIKIIGNSVGALGN) are Cytoplasmic-facing. Residues 789–809 (LTFILAIIVFIFALVGKQLLS) form a helical membrane-spanning segment. The Extracellular portion of the chain corresponds to 810 to 833 (ENYGCRRDGISVWNGERLRWHMCD). The segment at residues 834–854 (FFHSFLVVFRILCGEWIENMW) is an intramembrane region (pore-forming). The Extracellular segment spans residues 855–863 (VCMEVSQDY). A disulfide bridge connects residues Cys856 and Cys865. The helical transmembrane segment at 864 to 889 (ICLTLFLTVMVLGNLVVLNLFIALLL) threads the bilayer. Topologically, residues 890–1148 (NSFSADNLTA…GWQVRKTCYR (259 aa)) are cytoplasmic. A disordered region spans residues 1006 to 1094 (DLDELEEDVE…SEGSTVDCPD (89 aa)). Residues 1017–1038 (ASQSSWQEESPKGQQELLQQVQ) are compositionally biased toward polar residues. An III repeat occupies 1141–1450 (QVRKTCYRIV…KKYYNAMKKL (310 aa)). A helical transmembrane segment spans residues 1149-1172 (IVEHSWFESFIIFMILLSSGALAF). Residues 1173-1185 (EDNYLEEKPRVKS) lie on the Extracellular side of the membrane. The chain crosses the membrane as a helical span at residues 1186-1211 (VLEYTDRVFTFIFVFEMLLKWVAYGF). Topologically, residues 1212–1217 (KKYFTN) are cytoplasmic. A helical transmembrane segment spans residues 1218–1239 (AWCWLDFLIVNISLTSLIAKIL). At 1240–1243 (EYSD) the chain is on the extracellular side. Residues 1244 to 1265 (VASIKALRTLRALRPLRALSRF) traverse the membrane as a helical; Voltage-sensor segment. Over 1266–1284 (EGMRVVVDALVGAIPSIMN) the chain is Cytoplasmic. A helical membrane pass occupies residues 1285 to 1312 (VLLVCLIFWLIFSIMGVNLFAGKFSRCV). The Extracellular segment spans residues 1313–1354 (DTRSNPFSVVNSTFVTNKSDCYNQNNTGHFFWVNVKVNFDNV). N-linked (GlcNAc...) asparagine glycosylation is found at Asn1323, Asn1329, and Asn1337. Residues 1355–1376 (AMGYLALLQVATFKGWMDIMYA) constitute an intramembrane region (pore-forming). At 1377 to 1392 (AVDSRDINSQPNWEES) the chain is on the extracellular side. A helical membrane pass occupies residues 1393 to 1419 (LYMYLYFVVFIIFGGFFTLNLFVGVII). At 1420-1472 (DNFNQQKKKLGGQDIFMTEEQKKYYNAMKKLGSKKPQKPIPRPLNKYQGFVFD) the chain is on the cytoplasmic side. Phosphoserine; by PKC is present on Ser1452. One copy of the IV repeat lies at 1459–1758 (IPRPLNKYQG…WEKFDPEATQ (300 aa)). Residues 1473-1496 (IVTRQAFDIIIMALICLNMITMMV) traverse the membrane as a helical segment. At 1497 to 1507 (ETDNQSEEKTK) the chain is on the extracellular side. Asn1500 carries N-linked (GlcNAc...) asparagine glycosylation. A helical membrane pass occupies residues 1508 to 1531 (VLGRINQFFVAVFTGECVMKMFAL). The Cytoplasmic portion of the chain corresponds to 1532–1537 (RQYYFT). A helical membrane pass occupies residues 1538-1561 (NGWNVFDFIVVILSISSLLFSAIL). The Extracellular portion of the chain corresponds to 1562–1573 (SSLESYFSPTLL). Residues 1574 to 1595 (RVIRLARIGRILRLIRAAKGIR) traverse the membrane as a helical; Voltage-sensor segment. Residues 1596-1610 (TLLFALMMSLPALFN) lie on the Cytoplasmic side of the membrane. The chain crosses the membrane as a helical span at residues 1611-1633 (IGLLLFLVMFIYSIFGMASFANV). The Extracellular portion of the chain corresponds to 1634–1647 (IDEAGIDDMFNFKT). An intramembrane region (pore-forming) is located at residues 1648–1670 (FGNSMLCLFQITTSAGWDGLLSP). Residues 1671-1698 (ILNTGPPYCDPNRPNSNGSKGNCGSPAV) are Extracellular-facing. Asn1687 carries N-linked (GlcNAc...) asparagine glycosylation. The chain crosses the membrane as a helical span at residues 1699–1723 (GILFFTTYIIISFLIVVNMYIAVIL). The Cytoplasmic portion of the chain corresponds to 1724–1958 (ENFNVATEES…AKEGKSPGPQ (235 aa)). The IQ domain occupies 1852-1881 (EDISATIIQKAYRNYMLQRSLMLSNPLHVP). The segment at 1901-1958 (NDNGGLPDKSETASATSFPPSYDSVTRGLSDRANISTSSSMQNEDEVTAKEGKSPGPQ) is disordered. A compositionally biased stretch (polar residues) spans 1933-1942 (ANISTSSSMQ). Over residues 1947 to 1958 (VTAKEGKSPGPQ) the composition is skewed to basic and acidic residues.

This sequence belongs to the sodium channel (TC 1.A.1.10) family. Nav1.8/SCN10A subfamily. As to quaternary structure, the channel consists of an ion conducting pore forming alpha-subunit regulated by one or more associated auxiliary subunits SCN1B, SCN2B and SCN3B; electrophysiological properties may vary depending on the type of the associated beta subunits. Found in a number of complexes with PRX, DYNLT1 and PDZD2. Interacts with proteins such as FSTL1, PRX, DYNLT1, PDZD2, S100A10 and many others. Interacts with NEDD4 and NEDD4L. In terms of processing, ubiquitinated by NEDD4L; which promotes its endocytosis. Post-translationally, phosphorylation at Ser-1452 by PKC in a highly conserved cytoplasmic loop slows inactivation of the sodium channel and reduces peak sodium currents. Lacks the cysteine which covalently binds the conotoxin GVIIJ. This cysteine (position 815) is speculated in other sodium channel subunits alpha to be implied in covalent binding with the sodium channel subunit beta-2 or beta-4. As to expression, expressed in dorsal root ganglion and trigeminal ganglion.

The protein resides in the cell membrane. The catalysed reaction is Na(+)(in) = Na(+)(out). In terms of biological role, tetrodotoxin-resistant channel that mediates the voltage-dependent sodium ion permeability of excitable membranes. Assuming opened or closed conformations in response to the voltage difference across the membrane, the protein forms a sodium-selective channel through which sodium ions may pass in accordance with their electrochemical gradient. Plays a role in neuropathic pain mechanisms. This Mus musculus (Mouse) protein is Sodium channel protein type 10 subunit alpha.